The sequence spans 300 residues: Phosphoenolpyruvate phosphomutase (300 aa).

A propeptide spanning residues 1–10 (MLANSLKSFF) is cleaved from the precursor. Aspartate 66 acts as the Nucleophile in catalysis.

It belongs to the isocitrate lyase/PEP mutase superfamily. PEP mutase family.

The enzyme catalyses phosphoenolpyruvate + H(+) = 3-phosphonopyruvate. The protein operates within phosphorus metabolism; phosphonate biosynthesis. In terms of biological role, formation of a carbon-phosphorus bond by converting phosphoenolpyruvate (PEP) to phosphonopyruvate (P-Pyr). This Tetrahymena pyriformis protein is Phosphoenolpyruvate phosphomutase (PEPM).